The chain runs to 591 residues: V-type ATP synthase alpha chain (591 aa).

Gly-233–Thr-240 provides a ligand contact to ATP.

This sequence belongs to the ATPase alpha/beta chains family.

The catalysed reaction is ATP + H2O + 4 H(+)(in) = ADP + phosphate + 5 H(+)(out). Produces ATP from ADP in the presence of a proton gradient across the membrane. The V-type alpha chain is a catalytic subunit. In Streptococcus pneumoniae serotype 19F (strain G54), this protein is V-type ATP synthase alpha chain.